Here is a 286-residue protein sequence, read N- to C-terminus: D-tagatose-1,6-bisphosphate aldolase subunit KbaY (286 aa).

The active-site Proton donor is aspartate 82. Histidine 83 and histidine 180 together coordinate Zn(2+). Glycine 181 is a dihydroxyacetone phosphate binding site. Histidine 208 lines the Zn(2+) pocket. Dihydroxyacetone phosphate-binding positions include 209–211 (GAS) and 230–233 (NVAT).

This sequence belongs to the class II fructose-bisphosphate aldolase family. TagBP aldolase KbaY subfamily. Homotetramer. Forms a complex with KbaZ. Requires Zn(2+) as cofactor.

The enzyme catalyses D-tagatofuranose 1,6-bisphosphate = D-glyceraldehyde 3-phosphate + dihydroxyacetone phosphate. It participates in carbohydrate metabolism; D-tagatose 6-phosphate degradation; D-glyceraldehyde 3-phosphate and glycerone phosphate from D-tagatose 6-phosphate: step 2/2. Catalytic subunit of the tagatose-1,6-bisphosphate aldolase KbaYZ, which catalyzes the reversible aldol condensation of dihydroxyacetone phosphate (DHAP or glycerone-phosphate) with glyceraldehyde 3-phosphate (G3P) to produce tagatose 1,6-bisphosphate (TBP). Requires KbaZ subunit for full activity and stability. Is involved in the catabolism of N-acetylgalactosamine and D-galactosamine. The sequence is that of D-tagatose-1,6-bisphosphate aldolase subunit KbaY (kbaY) from Escherichia coli.